The chain runs to 544 residues: MAKFVFITGGVVSSIGKGIVAASLGRLLKSRGYNVSILKLDPYLNVDPGTMSPIQHGEVFVTEDGAETDLDLGHYERFTDTAMSRLNSVTTGSIYQAVINKERRGDYNGGTVQVIPHITGEIRERIHRVAANSNADVVITEIGGTVGDIESLPFLEAIREFSGDVGRNDLAYIHVTLLPFIGTSGELKTKPTQHSVKELRSIGIQPDVLVCRSDRTISEEMKRKIGGFCGVPTRAVIPSLDAESIYAVPLTLEQEGLCREVLDVLDLTDHDSDMAAWQELVHKLRNPGPAVKVALVGKYIQLNDAYLSVVEALRHACIAQDASLDLHWVCAEQIESDGAQALLKGMDAVVVPGGFGNRGVDGKIAAIRWAREQRVPFLGLCLGMQTAVIEWARNQAGLTEATSAELDAGTPHPVIHLLPEQQDVVDLGGTMRLGVYPCRIAPDTLAHRLYGDQVVYERHRHRYEFNNAYRNLFLESGYVVSGSSPDGRLVELIELKGHPFFTACQYHPEFLSRPGRPHPLFQGLIEAAQQRLPSSPVEAIQTQR.

The tract at residues 1–267 (MAKFVFITGG…CREVLDVLDL (267 aa)) is amidoligase domain. Ser13 is a CTP binding site. A UTP-binding site is contributed by Ser13. Residues 14–19 (SIGKGI) and Asp71 each bind ATP. Residues Asp71 and Glu141 each coordinate Mg(2+). CTP contacts are provided by residues 148–150 (DIE), 188–193 (KTKPTQ), and Lys224. UTP-binding positions include 188 to 193 (KTKPTQ) and Lys224. In terms of domain architecture, Glutamine amidotransferase type-1 spans 292–534 (KVALVGKYIQ…IEAAQQRLPS (243 aa)). Residue Gly354 coordinates L-glutamine. Cys381 serves as the catalytic Nucleophile; for glutamine hydrolysis. L-glutamine is bound by residues 382–385 (LGMQ), Glu405, and Arg462. Residues His507 and Glu509 contribute to the active site.

Belongs to the CTP synthase family. Homotetramer.

It catalyses the reaction UTP + L-glutamine + ATP + H2O = CTP + L-glutamate + ADP + phosphate + 2 H(+). It carries out the reaction L-glutamine + H2O = L-glutamate + NH4(+). The catalysed reaction is UTP + NH4(+) + ATP = CTP + ADP + phosphate + 2 H(+). It participates in pyrimidine metabolism; CTP biosynthesis via de novo pathway; CTP from UDP: step 2/2. Allosterically activated by GTP, when glutamine is the substrate; GTP has no effect on the reaction when ammonia is the substrate. The allosteric effector GTP functions by stabilizing the protein conformation that binds the tetrahedral intermediate(s) formed during glutamine hydrolysis. Inhibited by the product CTP, via allosteric rather than competitive inhibition. Its function is as follows. Catalyzes the ATP-dependent amination of UTP to CTP with either L-glutamine or ammonia as the source of nitrogen. Regulates intracellular CTP levels through interactions with the four ribonucleotide triphosphates. The chain is CTP synthase from Parasynechococcus marenigrum (strain WH8102).